A 340-amino-acid chain; its full sequence is uncharacterized protein (340 aa).

The RING-CH-type zinc-finger motif lies at 6–70 (KYEKSSARCW…PQCLTAYRIA (65 aa)). Residues cysteine 14, cysteine 17, cysteine 37, cysteine 39, histidine 44, cysteine 47, cysteine 60, and cysteine 63 each coordinate Zn(2+). 3 helical membrane passes run 249–269 (EFWILLSVAHVFLDAFTTKIL), 274–294 (PILLFPLAGKFLGRFIPGNFT), and 300–320 (IIGAFAALVFKDIFVYGFIAW).

The protein localises to the membrane. This is an uncharacterized protein from Schizosaccharomyces pombe (strain 972 / ATCC 24843) (Fission yeast).